A 119-amino-acid polypeptide reads, in one-letter code: Large ribosomal subunit protein uL22 (119 aa).

Belongs to the universal ribosomal protein uL22 family. Part of the 50S ribosomal subunit.

Functionally, this protein binds specifically to 23S rRNA; its binding is stimulated by other ribosomal proteins, e.g. L4, L17, and L20. It is important during the early stages of 50S assembly. It makes multiple contacts with different domains of the 23S rRNA in the assembled 50S subunit and ribosome. In terms of biological role, the globular domain of the protein is located near the polypeptide exit tunnel on the outside of the subunit, while an extended beta-hairpin is found that lines the wall of the exit tunnel in the center of the 70S ribosome. This chain is Large ribosomal subunit protein uL22, found in Chlorobium luteolum (strain DSM 273 / BCRC 81028 / 2530) (Pelodictyon luteolum).